A 281-amino-acid polypeptide reads, in one-letter code: 2-dehydro-3-deoxyphosphooctonate aldolase (281 aa).

It belongs to the KdsA family.

Its subcellular location is the cytoplasm. It catalyses the reaction D-arabinose 5-phosphate + phosphoenolpyruvate + H2O = 3-deoxy-alpha-D-manno-2-octulosonate-8-phosphate + phosphate. It participates in carbohydrate biosynthesis; 3-deoxy-D-manno-octulosonate biosynthesis; 3-deoxy-D-manno-octulosonate from D-ribulose 5-phosphate: step 2/3. It functions in the pathway bacterial outer membrane biogenesis; lipopolysaccharide biosynthesis. This Stutzerimonas stutzeri (strain A1501) (Pseudomonas stutzeri) protein is 2-dehydro-3-deoxyphosphooctonate aldolase.